Consider the following 507-residue polypeptide: Arylsulfatase A (507 aa).

Positions 1 to 18 are cleaved as a signal peptide; sequence MEALWTLTLALAAGLAAA. Residues Asp-29, Asp-30, and Cys-69 each coordinate Ca(2+). The active-site Nucleophile is Cys-69. Cys-69 is subject to 3-oxoalanine (Cys). A substrate-binding site is contributed by Lys-123. His-125 is a catalytic residue. Position 150 (Ser-150) interacts with substrate. 2 disulfide bridges follow: Cys-156/Cys-172 and Cys-161/Cys-168. N-linked (GlcNAc...) asparagine glycosylation is present at Asn-158. Asn-184 is a glycosylation site (N-linked (GlcNAc...) asparagine). His-229 lines the substrate pocket. Residues Asp-281 and Asn-282 each contribute to the Ca(2+) site. Disulfide bonds link Cys-300–Cys-414, Cys-488–Cys-500, Cys-489–Cys-502, and Cys-493–Cys-499. Lys-302 contributes to the substrate binding site. The N-linked (GlcNAc...) asparagine glycan is linked to Asn-350.

It belongs to the sulfatase family. As to quaternary structure, homodimer at neutral pH and homooctamer at acidic pH. Exists both as a single chain of 58 kDa (component A) or as a chain of 50 kDa (component B) linked by disulfide bond(s) to a 7 kDa chain (component C). Interacts with SUMF1. The cofactor is Ca(2+). The conversion to 3-oxoalanine (also known as C-formylglycine, FGly), of a serine or cysteine residue in prokaryotes and of a cysteine residue in eukaryotes, is critical for catalytic activity. This post-translational modification is severely defective in multiple sulfatase deficiency (MSD).

The protein resides in the endoplasmic reticulum. It is found in the lysosome. The catalysed reaction is an N-acyl-1-beta-D-(3-O-sulfo)-galactosyl-sphing-4-enine + H2O = a beta-D-galactosyl-(1&lt;-&gt;1')-N-acylsphing-4-enine + sulfate + H(+). Functionally, hydrolyzes cerebroside sulfate. The chain is Arylsulfatase A (ARSA) from Bos taurus (Bovine).